The following is a 223-amino-acid chain: RNA-free ribonuclease P (223 aa).

Belongs to the HARP family.

The catalysed reaction is Endonucleolytic cleavage of RNA, removing 5'-extranucleotides from tRNA precursor.. Functionally, RNA-free RNase P that catalyzes the removal of the 5'-leader sequence from pre-tRNA to produce the mature 5'-terminus. The chain is RNA-free ribonuclease P from Methanococcus maripaludis (strain DSM 14266 / JCM 13030 / NBRC 101832 / S2 / LL).